Reading from the N-terminus, the 597-residue chain is Elongation factor 4 (597 aa).

The 183-residue stretch at 2–184 (KHIRNFSIIA…NIVSAIPAPE (183 aa)) folds into the tr-type G domain. GTP-binding positions include 14–19 (DHGKST) and 131–134 (NKID).

Belongs to the TRAFAC class translation factor GTPase superfamily. Classic translation factor GTPase family. LepA subfamily.

The protein localises to the cell inner membrane. The catalysed reaction is GTP + H2O = GDP + phosphate + H(+). Functionally, required for accurate and efficient protein synthesis under certain stress conditions. May act as a fidelity factor of the translation reaction, by catalyzing a one-codon backward translocation of tRNAs on improperly translocated ribosomes. Back-translocation proceeds from a post-translocation (POST) complex to a pre-translocation (PRE) complex, thus giving elongation factor G a second chance to translocate the tRNAs correctly. Binds to ribosomes in a GTP-dependent manner. The chain is Elongation factor 4 from Vibrio campbellii (strain ATCC BAA-1116).